The sequence spans 338 residues: MPEVKDGIIDRKMQGEFVSSFIRQLKFHREDFKNIGYIGGFTSLIDMGNFALSFNNDGVGTKTMIAEQANKYDTLGIDCVAMNVNDAITVGSEPIAMVDYLAVRDLNEDIAKQLGNGFNVGAQIANISIVGGETAVVPEIVNHIDVSGAVIGIVQKNQIITGANIKEGDVIIGLGSSGLHSNGFTTVRKIISDNEINLFDNFPGESKKTYEVLLEPTRIYVREILDVMGIIQIKGMANITGGGFKNITRMKDMKYVIDDPMEPQNVFVRLMELGNLNYKQMYEIFNMGTGFVVVIGEDDKIDFINTLKNRVPLKVIGHVENGTGVEIPKYSVSLMGYY.

It belongs to the AIR synthase family.

The protein resides in the cytoplasm. It catalyses the reaction 2-formamido-N(1)-(5-O-phospho-beta-D-ribosyl)acetamidine + ATP = 5-amino-1-(5-phospho-beta-D-ribosyl)imidazole + ADP + phosphate + H(+). The protein operates within purine metabolism; IMP biosynthesis via de novo pathway; 5-amino-1-(5-phospho-D-ribosyl)imidazole from N(2)-formyl-N(1)-(5-phospho-D-ribosyl)glycinamide: step 2/2. This Thermoplasma volcanium (strain ATCC 51530 / DSM 4299 / JCM 9571 / NBRC 15438 / GSS1) protein is Phosphoribosylformylglycinamidine cyclo-ligase.